We begin with the raw amino-acid sequence, 429 residues long: Glutamate-1-semialdehyde 2,1-aminomutase (429 aa).

Lys268 carries the post-translational modification N6-(pyridoxal phosphate)lysine.

This sequence belongs to the class-III pyridoxal-phosphate-dependent aminotransferase family. HemL subfamily. Homodimer. Pyridoxal 5'-phosphate serves as cofactor.

It localises to the cytoplasm. It catalyses the reaction (S)-4-amino-5-oxopentanoate = 5-aminolevulinate. The protein operates within porphyrin-containing compound metabolism; protoporphyrin-IX biosynthesis; 5-aminolevulinate from L-glutamyl-tRNA(Glu): step 2/2. This chain is Glutamate-1-semialdehyde 2,1-aminomutase, found in Serratia proteamaculans (strain 568).